The primary structure comprises 551 residues: Formate--tetrahydrofolate ligase (551 aa).

65-72 contacts ATP; sequence TPAGEGKT.

It belongs to the formate--tetrahydrofolate ligase family.

It catalyses the reaction (6S)-5,6,7,8-tetrahydrofolate + formate + ATP = (6R)-10-formyltetrahydrofolate + ADP + phosphate. It functions in the pathway one-carbon metabolism; tetrahydrofolate interconversion. The protein is Formate--tetrahydrofolate ligase of Thermosipho africanus (strain TCF52B).